The chain runs to 139 residues: Large ribosomal subunit protein uL16 (139 aa).

This sequence belongs to the universal ribosomal protein uL16 family. As to quaternary structure, part of the 50S ribosomal subunit.

In terms of biological role, binds 23S rRNA and is also seen to make contacts with the A and possibly P site tRNAs. This Treponema denticola (strain ATCC 35405 / DSM 14222 / CIP 103919 / JCM 8153 / KCTC 15104) protein is Large ribosomal subunit protein uL16.